The chain runs to 309 residues: Probable manganese-dependent inorganic pyrophosphatase (309 aa).

Mn(2+) contacts are provided by histidine 9, aspartate 13, aspartate 15, aspartate 75, histidine 97, and aspartate 149.

It belongs to the PPase class C family. Requires Mn(2+) as cofactor.

It localises to the cytoplasm. It catalyses the reaction diphosphate + H2O = 2 phosphate + H(+). The chain is Probable manganese-dependent inorganic pyrophosphatase from Bacillus cereus (strain ZK / E33L).